Reading from the N-terminus, the 327-residue chain is Ornithine carbamoyltransferase (327 aa).

Residues 56–59 (STRT), Q83, R107, and 134–137 (HPTQ) contribute to the carbamoyl phosphate site. L-ornithine contacts are provided by residues N166, D230, and 234 to 235 (SM). Carbamoyl phosphate contacts are provided by residues 269–270 (CL) and R314.

The protein belongs to the aspartate/ornithine carbamoyltransferase superfamily. OTCase family.

Its subcellular location is the cytoplasm. The catalysed reaction is carbamoyl phosphate + L-ornithine = L-citrulline + phosphate + H(+). It participates in amino-acid degradation; L-arginine degradation via ADI pathway; carbamoyl phosphate from L-arginine: step 2/2. Reversibly catalyzes the transfer of the carbamoyl group from carbamoyl phosphate (CP) to the N(epsilon) atom of ornithine (ORN) to produce L-citrulline. This Borreliella burgdorferi (strain ZS7) (Borrelia burgdorferi) protein is Ornithine carbamoyltransferase.